The sequence spans 333 residues: Adenosine deaminase (333 aa).

Zn(2+) is bound by residues His12 and His14. Residues His14, Asp16, and Gly170 each contribute to the substrate site. Residue His197 participates in Zn(2+) binding. Catalysis depends on Glu200, which acts as the Proton donor. Position 278 (Asp278) interacts with Zn(2+). Asp279 serves as a coordination point for substrate.

It belongs to the metallo-dependent hydrolases superfamily. Adenosine and AMP deaminases family. Adenosine deaminase subfamily. Zn(2+) is required as a cofactor.

The enzyme catalyses adenosine + H2O + H(+) = inosine + NH4(+). It carries out the reaction 2'-deoxyadenosine + H2O + H(+) = 2'-deoxyinosine + NH4(+). In terms of biological role, catalyzes the hydrolytic deamination of adenosine and 2-deoxyadenosine. The chain is Adenosine deaminase from Photorhabdus laumondii subsp. laumondii (strain DSM 15139 / CIP 105565 / TT01) (Photorhabdus luminescens subsp. laumondii).